The sequence spans 77 residues: Putative defensin-like protein 120 (77 aa).

The signal sequence occupies residues 1–26 (MTQKATILAIFMVVLVLGLETKETQG). 4 cysteine pairs are disulfide-bonded: Cys-30-Cys-75, Cys-39-Cys-60, Cys-44-Cys-69, and Cys-48-Cys-71.

The protein belongs to the DEFL family.

The protein localises to the secreted. In Arabidopsis thaliana (Mouse-ear cress), this protein is Putative defensin-like protein 120 (LCR56).